The primary structure comprises 208 residues: Small ribosomal subunit protein uS4 (208 aa).

Residues 95-161 (MRLDALVLRA…VPLQVAAAGA (67 aa)) enclose the S4 RNA-binding domain.

This sequence belongs to the universal ribosomal protein uS4 family. Part of the 30S ribosomal subunit. Contacts protein S5. The interaction surface between S4 and S5 is involved in control of translational fidelity.

One of the primary rRNA binding proteins, it binds directly to 16S rRNA where it nucleates assembly of the body of the 30S subunit. Its function is as follows. With S5 and S12 plays an important role in translational accuracy. This chain is Small ribosomal subunit protein uS4, found in Pseudarthrobacter chlorophenolicus (strain ATCC 700700 / DSM 12829 / CIP 107037 / JCM 12360 / KCTC 9906 / NCIMB 13794 / A6) (Arthrobacter chlorophenolicus).